Here is a 257-residue protein sequence, read N- to C-terminus: Fructose-2,6-bisphosphatase TIGAR B (257 aa).

Histidine 11 functions as the Tele-phosphohistidine intermediate in the catalytic mechanism. Glutamate 89 serves as the catalytic Proton donor/acceptor.

The protein belongs to the phosphoglycerate mutase family.

The protein resides in the cytoplasm. It localises to the nucleus. The protein localises to the mitochondrion. The enzyme catalyses beta-D-fructose 2,6-bisphosphate + H2O = beta-D-fructose 6-phosphate + phosphate. Its function is as follows. Fructose-bisphosphatase hydrolyzing fructose-2,6-bisphosphate as well as fructose-1,6-bisphosphate. Acts as a negative regulator of glycolysis by lowering intracellular levels of fructose-2,6-bisphosphate in a p53/TP53-dependent manner, resulting in the pentose phosphate pathway (PPP) activation and NADPH production. Contributes to the generation of reduced glutathione to cause a decrease in intracellular reactive oxygen species (ROS) content, correlating with its ability to protect cells from oxidative or metabolic stress-induced cell death. May play a role in mitophagy inhibition. The sequence is that of Fructose-2,6-bisphosphatase TIGAR B from Danio rerio (Zebrafish).